A 125-amino-acid chain; its full sequence is Small ribosomal subunit protein uS12c (125 aa).

The segment at 104–125 (ASGVKDRKQGRSKYGGKRPKGD) is disordered. Residues 113 to 125 (GRSKYGGKRPKGD) are compositionally biased toward basic residues.

It belongs to the universal ribosomal protein uS12 family. As to quaternary structure, part of the 30S ribosomal subunit.

Its subcellular location is the plastid. The protein resides in the chloroplast. Functionally, with S4 and S5 plays an important role in translational accuracy. Located at the interface of the 30S and 50S subunits. This is Small ribosomal subunit protein uS12c (rps12) from Emiliania huxleyi (Coccolithophore).